We begin with the raw amino-acid sequence, 35 residues long: Phospholipase A2 neuwieditoxin-1 (35 aa).

Ca(2+)-binding residues include Tyr-27, Gly-29, and Gly-31.

It belongs to the phospholipase A2 family. Group II subfamily. D49 sub-subfamily. Dimer. Requires Ca(2+) as cofactor. As to expression, expressed by the venom gland.

The protein localises to the secreted. It carries out the reaction a 1,2-diacyl-sn-glycero-3-phosphocholine + H2O = a 1-acyl-sn-glycero-3-phosphocholine + a fatty acid + H(+). In terms of biological role, snake venom phospholipase A2 (PLA2) that shows presynaptic neurotoxicity. 10 ug/ml of this protein produce complete neuromuscular blockade up to 80 minutes, without inhibiting the responses to acetylcholine (ACh) and potassium chloride (KCl). In addition, it produces a calcium-dependent blockade of acetylcholine release and causes appearance of giant miniature end-plate potentials. PLA2 catalyzes the calcium-dependent hydrolysis of the 2-acyl groups in 3-sn-phosphoglycerides. The sequence is that of Phospholipase A2 neuwieditoxin-1 from Bothrops pauloensis (Neuwied's lancehead).